The following is a 341-amino-acid chain: LIM and senescent cell antigen-like-containing domain protein 2 (341 aa).

5 consecutive LIM zinc-binding domains span residues 13–74 (AMCQ…LFAP), 76–133 (CGFC…EKAK), 138–195 (FICQ…KMGI), 196–255 (PICG…LFGD), and 256–315 (VCYN…FPLE). Ser328 carries the phosphoserine modification.

As to quaternary structure, interacts with integrin-linked protein kinase 1 (ILK) via the first LIM domain, and in competition with LIMS1. Part of the heterotrimeric IPP complex composed of integrin-linked kinase (ILK), LIMS1 or LIMS2, and PARVA. Interacts with TGFB1I1. As to expression, detected in heart, lung, kidney, liver, urinary bladder, fat, skin, skeletal muscle, uterus, large intestine and testis.

It is found in the cell junction. The protein localises to the focal adhesion. It localises to the cell membrane. Its function is as follows. Adapter protein in a cytoplasmic complex linking beta-integrins to the actin cytoskeleton, bridges the complex to cell surface receptor tyrosine kinases and growth factor receptors. The chain is LIM and senescent cell antigen-like-containing domain protein 2 (Lims2) from Mus musculus (Mouse).